Consider the following 413-residue polypeptide: Replication factor C large subunit (413 aa).

54-61 is an ATP binding site; that stretch reads GPPGSGKT.

The protein belongs to the activator 1 small subunits family. RfcL subfamily. In terms of assembly, heteromultimer composed of small subunits (RfcS) and large subunits (RfcL).

Part of the RFC clamp loader complex which loads the PCNA sliding clamp onto DNA. The sequence is that of Replication factor C large subunit from Thermofilum pendens (strain DSM 2475 / Hrk 5).